The primary structure comprises 161 residues: Probable metalloprotease HVO_1016 (161 aa).

The 122-residue stretch at 10 to 131 (VGIAADALDF…WEAFDQSGEV (122 aa)) folds into the MPN domain. The Proton donor/acceptor role is filled by Glu31. The Zn(2+) site is built by His87, His89, and Asp100. Positions 87–100 (HSHPNGVLRPSDAD) match the JAMM motif motif.

The protein belongs to the peptidase M67B family. As to quaternary structure, monomer and homodimer. It depends on Zn(2+) as a cofactor.

Its function is as follows. Probable metalloprotease. Does not hydrolyze SAMP1- and SAMP2-protein conjugates, diglycine-AMC, Ub-AMC, hemoglobin, cytochrome c, carbonic anhydrase, creatinine phosphokinase, beta-amylase and bovine serum albumin. In Haloferax volcanii (strain ATCC 29605 / DSM 3757 / JCM 8879 / NBRC 14742 / NCIMB 2012 / VKM B-1768 / DS2) (Halobacterium volcanii), this protein is Probable metalloprotease HVO_1016.